A 422-amino-acid polypeptide reads, in one-letter code: Vitamin D3 receptor (422 aa).

A DNA-binding region (nuclear receptor) is located at residues 22 to 90 (PRICGVCGDK…RLKRCVDIGM (69 aa)). Zn(2+)-binding residues include cysteine 25, cysteine 28, cysteine 42, cysteine 45, cysteine 61, cysteine 67, cysteine 77, and cysteine 80. 2 NR C4-type zinc fingers span residues 25-45 (CGVCGDKATGFHFNAMTCEGC) and 61-85 (CPFNGDCRITKDNRRHCQSCRLKRC). Residues 98–127 (DEEVQRKRQMINKRKSEEALKESMRPKISD) are hinge. Residues 128–418 (EQQKMIDILL…LTPLMLEVFS (291 aa)) form the NR LBD domain. The disordered stretch occupies residues 170 to 191 (RSSSVHTQGSPSEDSDVFTSSP). Serine 232 provides a ligand contact to calcitriol. Positions 241–259 (KMIPGFRDLIAEDQIALLK) are interaction with coactivator LXXLL motif. The calcitriol site is built by arginine 269, serine 273, histidine 300, and histidine 392. The 9aaTAD motif lies at 411-419 (PLMLEVFSD).

Belongs to the nuclear hormone receptor family. NR1 subfamily. In terms of assembly, homodimer in the absence of bound vitamin D3. Heterodimer with RXRA after vitamin D3 binding. Detected in all tissues examined. Highest level in small intestine and skin.

It is found in the nucleus. The protein resides in the cytoplasm. In terms of biological role, nuclear receptor for calcitriol, the active form of vitamin D3 which mediates the action of this vitamin on cells. Enters the nucleus upon vitamin D3 binding where it forms heterodimers with the retinoid X receptor/RXR. The VDR-RXR heterodimers bind to specific response elements on DNA and activate the transcription of vitamin D3-responsive target genes. Plays a central role in calcium homeostasis. Also functions as a receptor for the secondary bile acid lithocholic acid (LCA) and its metabolites. The sequence is that of Vitamin D3 receptor (vdr) from Xenopus laevis (African clawed frog).